The following is a 256-amino-acid chain: Thiazole synthase (256 aa).

Lys96 (schiff-base intermediate with DXP) is an active-site residue. Residues Gly157, 183–184 (AG), and 205–206 (NT) each bind 1-deoxy-D-xylulose 5-phosphate.

This sequence belongs to the ThiG family. Homotetramer. Forms heterodimers with either ThiH or ThiS.

Its subcellular location is the cytoplasm. The catalysed reaction is [ThiS sulfur-carrier protein]-C-terminal-Gly-aminoethanethioate + 2-iminoacetate + 1-deoxy-D-xylulose 5-phosphate = [ThiS sulfur-carrier protein]-C-terminal Gly-Gly + 2-[(2R,5Z)-2-carboxy-4-methylthiazol-5(2H)-ylidene]ethyl phosphate + 2 H2O + H(+). It participates in cofactor biosynthesis; thiamine diphosphate biosynthesis. Catalyzes the rearrangement of 1-deoxy-D-xylulose 5-phosphate (DXP) to produce the thiazole phosphate moiety of thiamine. Sulfur is provided by the thiocarboxylate moiety of the carrier protein ThiS. In vitro, sulfur can be provided by H(2)S. The protein is Thiazole synthase of Bacillus cytotoxicus (strain DSM 22905 / CIP 110041 / 391-98 / NVH 391-98).